The sequence spans 464 residues: Asparagine--tRNA ligase (464 aa).

It belongs to the class-II aminoacyl-tRNA synthetase family. As to quaternary structure, homodimer.

The protein resides in the cytoplasm. It carries out the reaction tRNA(Asn) + L-asparagine + ATP = L-asparaginyl-tRNA(Asn) + AMP + diphosphate + H(+). The protein is Asparagine--tRNA ligase of Clostridium botulinum (strain Eklund 17B / Type B).